The following is a 408-amino-acid chain: Putative gustatory receptor 58b (408 aa).

Residues 1 to 44 (MLHPKLGRVMNVVYYHSVVFALMSTTLRIRSCRKCLRLEKVSRT) are Cytoplasmic-facing. The helical transmembrane segment at 45-65 (YTIYSFFVGIFLFLNLYFMVP) threads the bilayer. Over 66-82 (RIMEDGYMKYNIVLQWN) the chain is Extracellular. The helical transmembrane segment at 83-103 (FFVMLFLRAIAVVSCYGTLWL) threads the bilayer. Over 104–150 (KRHKIIQLYKYSLIYWKRFGHITRAIVDKKELLDLQESLARIMIRKI) the chain is Cytoplasmic. A helical transmembrane segment spans residues 151-171 (ILLYSAFLCSTVLQYQLLSVI). Over 172 to 193 (NPQIFLAFCARLTHFLHFLCVK) the chain is Extracellular. A helical membrane pass occupies residues 194-214 (MGFFGVLVLLNHQFLVIHLAI). Topologically, residues 215–245 (NALHGRKARKKWKALRSVAAMHLKTLRLARR) are cytoplasmic. A helical membrane pass occupies residues 246-266 (IFDMFDIANATVFINMFMTAI). At 267–284 (NILYHAVQYSNSSIKSNG) the chain is on the extracellular side. Residue N277 is glycosylated (N-linked (GlcNAc...) asparagine). A helical transmembrane segment spans residues 285 to 305 (WGILFGNGLIVFNFWGTMALM). At 306 to 364 (EMLDSVVTSCNNTGQQLRQLSDLPKVGPKMQRELDVFTMQLRQNRLVYKICGIVELDKP) the chain is on the cytoplasmic side. A helical membrane pass occupies residues 365–385 (ACLSYIGSILSNVIILMQFDL). At 386-408 (RRQRQPINDRQYLIHLMKNKTKV) the chain is on the extracellular side. The N-linked (GlcNAc...) asparagine glycan is linked to N404.

Belongs to the insect chemoreceptor superfamily. Gustatory receptor (GR) family. Gr22e subfamily. In terms of tissue distribution, expressed in the adult labellar chemosensory neurons, labral sense organ and thorax. In larvae, is in neurons of the terminal external chemosensory organ as well as in the dorsal pharyngeal sense organ.

The protein localises to the cell membrane. Functionally, probable gustatory receptor which mediates acceptance or avoidance behavior, depending on its substrates. In Drosophila melanogaster (Fruit fly), this protein is Putative gustatory receptor 58b (Gr58b).